The chain runs to 226 residues: Triosephosphate isomerase (226 aa).

12–14 (NFK) provides a ligand contact to substrate. Residue His-96 is the Electrophile of the active site. Glu-144 (proton acceptor) is an active-site residue. Substrate-binding positions include Ile-149, Gly-184, and 205-206 (AS).

This sequence belongs to the triosephosphate isomerase family. In terms of assembly, homotetramer; dimer of dimers.

Its subcellular location is the cytoplasm. It catalyses the reaction D-glyceraldehyde 3-phosphate = dihydroxyacetone phosphate. Its pathway is carbohydrate biosynthesis; gluconeogenesis. The protein operates within carbohydrate degradation; glycolysis; D-glyceraldehyde 3-phosphate from glycerone phosphate: step 1/1. Involved in the gluconeogenesis. Catalyzes stereospecifically the conversion of dihydroxyacetone phosphate (DHAP) to D-glyceraldehyde-3-phosphate (G3P). The chain is Triosephosphate isomerase from Thermococcus kodakarensis (strain ATCC BAA-918 / JCM 12380 / KOD1) (Pyrococcus kodakaraensis (strain KOD1)).